Reading from the N-terminus, the 322-residue chain is Picrinine-N-methytransferase (322 aa).

Residues 103–112 (MLDVGCGLGG) are SAM motif I. The segment at 166–174 (GTFDLVFTI) is SAM motif II. The tract at residues 193 to 202 (VAAPGAPVVI) is SAM motif III.

This sequence belongs to the class I-like SAM-binding methyltransferase superfamily. gTMT family. In terms of assembly, homodimer. As to expression, accumulates in tissues actively synthesizing monoterpenoid indole alkaloids (MIAs) (at protein level). Mainly expressed in young leaves, but barely in roots and stems.

The protein resides in the cytoplasm. Its subcellular location is the cytosol. It catalyses the reaction picrinine + S-adenosyl-L-methionine = ervincine + S-adenosyl-L-homocysteine + H(+). The protein operates within alkaloid biosynthesis; vindoline biosynthesis. In terms of biological role, S-adenosyl-L-methionine-dependent N-methyltransferase involved in the biosynthesis of biologically active monoterpenoid indole alkaloids (MIAs) natural products including vindoline. Catalyzes the conversion of picrinine to N-methylpicrinine (ervincine). Also accepts, with low efficiency, 21-hydroxycyclolochnericine and norajmaline as substrates. In Vinca minor (Common periwinkle), this protein is Picrinine-N-methytransferase.